Here is a 326-residue protein sequence, read N- to C-terminus: Acetyl-coenzyme A carboxylase carboxyl transferase subunit beta (326 aa).

Residues 29-298 (LWIKCEACGT…TLISDESLET (270 aa)) form the CoA carboxyltransferase N-terminal domain. Residues Cys-33, Cys-36, Cys-52, and Cys-55 each contribute to the Zn(2+) site. Residues 33–55 (CEACGTLTYTKDLQANQMVCPEC) form a C4-type zinc finger. The interval 302–326 (CHLPFQAESHNLSTTDNKIQPTPQG) is disordered. Over residues 309 to 326 (ESHNLSTTDNKIQPTPQG) the composition is skewed to polar residues.

Belongs to the AccD/PCCB family. Acetyl-CoA carboxylase is a heterohexamer composed of biotin carboxyl carrier protein (AccB), biotin carboxylase (AccC) and two subunits each of ACCase subunit alpha (AccA) and ACCase subunit beta (AccD). Zn(2+) is required as a cofactor.

Its subcellular location is the cytoplasm. The catalysed reaction is N(6)-carboxybiotinyl-L-lysyl-[protein] + acetyl-CoA = N(6)-biotinyl-L-lysyl-[protein] + malonyl-CoA. The protein operates within lipid metabolism; malonyl-CoA biosynthesis; malonyl-CoA from acetyl-CoA: step 1/1. Component of the acetyl coenzyme A carboxylase (ACC) complex. Biotin carboxylase (BC) catalyzes the carboxylation of biotin on its carrier protein (BCCP) and then the CO(2) group is transferred by the transcarboxylase to acetyl-CoA to form malonyl-CoA. The polypeptide is Acetyl-coenzyme A carboxylase carboxyl transferase subunit beta (Trichodesmium erythraeum (strain IMS101)).